A 120-amino-acid chain; its full sequence is NAD(P)H-quinone oxidoreductase subunit 3 (120 aa).

The next 3 membrane-spanning stretches (helical) occupy residues 6-26 (GYDA…LALI), 64-84 (MFAL…PWAV), and 89-109 (LGVL…VALA).

This sequence belongs to the complex I subunit 3 family. In terms of assembly, NDH-1 can be composed of about 15 different subunits; different subcomplexes with different compositions have been identified which probably have different functions.

Its subcellular location is the cellular thylakoid membrane. It carries out the reaction a plastoquinone + NADH + (n+1) H(+)(in) = a plastoquinol + NAD(+) + n H(+)(out). The catalysed reaction is a plastoquinone + NADPH + (n+1) H(+)(in) = a plastoquinol + NADP(+) + n H(+)(out). Functionally, NDH-1 shuttles electrons from an unknown electron donor, via FMN and iron-sulfur (Fe-S) centers, to quinones in the respiratory and/or the photosynthetic chain. The immediate electron acceptor for the enzyme in this species is believed to be plastoquinone. Couples the redox reaction to proton translocation, and thus conserves the redox energy in a proton gradient. Cyanobacterial NDH-1 also plays a role in inorganic carbon-concentration. The sequence is that of NAD(P)H-quinone oxidoreductase subunit 3 from Parasynechococcus marenigrum (strain WH8102).